A 205-amino-acid polypeptide reads, in one-letter code: Small ribosomal subunit protein uS3c (205 aa).

One can recognise a KH type-2 domain in the interval 37-106 (IRQLLRDYVL…TWRISLVEVS (70 aa)).

Belongs to the universal ribosomal protein uS3 family. Part of the 30S ribosomal subunit.

The protein resides in the plastid. Its subcellular location is the chloroplast. This is Small ribosomal subunit protein uS3c (rps3) from Cyanidioschyzon merolae (strain NIES-3377 / 10D) (Unicellular red alga).